Reading from the N-terminus, the 117-residue chain is Ubiquitin-like protein 3 (117 aa).

The Ubiquitin-like domain occupies 10–88; that stretch reads INLRLILVSG…PFGKTTVMHL (79 aa). A lipid anchor (S-palmitoyl cysteine) is attached at Cys-113. Cysteine methyl ester is present on Cys-114. The S-geranylgeranyl cysteine moiety is linked to residue Cys-114. The propeptide at 115 to 117 is removed in mature form; the sequence is VIL.

It localises to the cell membrane. In Mus musculus (Mouse), this protein is Ubiquitin-like protein 3 (Ubl3).